We begin with the raw amino-acid sequence, 539 residues long: Eukaryotic translation initiation factor 3 subunit L (539 aa).

Residues 306-514 (TFSDILLYVQ…IHIADTKVSH (209 aa)) enclose the PCI domain.

It belongs to the eIF-3 subunit L family. As to quaternary structure, component of the eukaryotic translation initiation factor 3 (eIF-3) complex. The eIF-3 complex interacts with pix.

The protein localises to the cytoplasm. Component of the eukaryotic translation initiation factor 3 (eIF-3) complex, which is involved in protein synthesis of a specialized repertoire of mRNAs and, together with other initiation factors, stimulates binding of mRNA and methionyl-tRNAi to the 40S ribosome. The eIF-3 complex specifically targets and initiates translation of a subset of mRNAs involved in cell proliferation. The chain is Eukaryotic translation initiation factor 3 subunit L from Drosophila willistoni (Fruit fly).